Reading from the N-terminus, the 509-residue chain is Maturase K (509 aa).

It belongs to the intron maturase 2 family. MatK subfamily.

Its subcellular location is the plastid. It localises to the chloroplast. Its function is as follows. Usually encoded in the trnK tRNA gene intron. Probably assists in splicing its own and other chloroplast group II introns. This is Maturase K from Clematis ligusticifolia (Western white clematis).